A 711-amino-acid polypeptide reads, in one-letter code: L-type lectin-domain containing receptor kinase VIII.2 (711 aa).

The N-terminal stretch at 1–30 (MLKLPPRFFSVYSTLIHILASFLCSSDVRG) is a signal peptide. The Extracellular segment spans residues 31 to 315 (DFPATRFDLG…NKLCKKSPAA (285 aa)). Positions 35 to 260 (TRFDLGTLTL…IHSVDWWSFS (226 aa)) are legume-lectin like. A glycan (N-linked (GlcNAc...) asparagine) is linked at asparagine 57. Positions 265–306 (ESSESPPPMPNSPPPSSPSSSITPSLSTVRRKTADPSSSCRN) are disordered. A compositionally biased stretch (pro residues) spans 269–281 (SPPPMPNSPPPSS). Residues 282 to 291 (PSSSITPSLS) are compositionally biased toward low complexity. The helical transmembrane segment at 316–336 (VAGVVTAGAFFLALFAGVIIW) threads the bilayer. Residues 337–711 (VYSKKIKYTR…IFIVGKDRSV (375 aa)) lie on the Cytoplasmic side of the membrane. Residues 374 to 656 (FSSSRVIGNG…LVGEADVPEV (283 aa)) enclose the Protein kinase domain. Residues 380–388 (IGNGAFGTV) and lysine 403 contribute to the ATP site. The active-site Proton acceptor is the aspartate 497.

This sequence in the C-terminal section; belongs to the protein kinase superfamily. Ser/Thr protein kinase family. It in the N-terminal section; belongs to the leguminous lectin family.

The protein resides in the cell membrane. It catalyses the reaction L-seryl-[protein] + ATP = O-phospho-L-seryl-[protein] + ADP + H(+). The catalysed reaction is L-threonyl-[protein] + ATP = O-phospho-L-threonyl-[protein] + ADP + H(+). Functionally, involved in resistance response to the pathogenic oomycetes Phytophthora infestans and Phytophthora capsici. This chain is L-type lectin-domain containing receptor kinase VIII.2, found in Arabidopsis thaliana (Mouse-ear cress).